Reading from the N-terminus, the 293-residue chain is Protein transport protein yif1 (293 aa).

Topologically, residues 1–139 (MPPKLYHPQP…PPAEDLNSPD (139 aa)) are cytoplasmic. The chain crosses the membrane as a helical span at residues 140 to 160 (MYIPLMAFTTHILLLCALAGL). Over 161–175 (QDDFQPELFGLRASK) the chain is Lumenal. The helical transmembrane segment at 176 to 196 (ACAVVLVEFLATRLGCYLLNI) threads the bilayer. Over 197–201 (SSQSQ) the chain is Cytoplasmic. The helical transmembrane segment at 202–222 (VLDLLAFSGYKFVGLILTSLS) threads the bilayer. Residues 223-226 (KLFE) lie on the Lumenal side of the membrane. The helical transmembrane segment at 227-247 (MPWVTRFVFLYMYLATAFFLL) threads the bilayer. Residues 248 to 271 (RSLKYAVLPESTMAINATITSHQR) are Cytoplasmic-facing. A helical transmembrane segment spans residues 272–292 (SRRIYFLFFIAASQILFMYVL). Position 293 (S293) is a topological domain, lumenal.

This sequence belongs to the YIF1 family. In terms of assembly, component of the yip1-yif1 complex, composed of at least yif1, yip1 and yos1. The complex interacts with the ER to Golgi SNAREs bos1 and sec22.

It localises to the endoplasmic reticulum membrane. The protein localises to the golgi apparatus membrane. The protein resides in the cytoplasmic vesicle. It is found in the COPII-coated vesicle. In terms of biological role, required for fusion of ER-derived vesicles with the Golgi during ER-to-Golgi protein transport. May be involved in proper membrane localization of Rab GTPases. This Schizosaccharomyces pombe (strain 972 / ATCC 24843) (Fission yeast) protein is Protein transport protein yif1.